Here is a 376-residue protein sequence, read N- to C-terminus: Carbamoyl phosphate synthase small chain (376 aa).

Residues 1 to 187 (MKALLVLEDG…AEDGSYAWRG (187 aa)) form a CPSase region. The L-glutamine site is built by S45, G239, and G241. Residues 191–376 (PLLVYDFGIK…RKIIGESAGA (186 aa)) form the Glutamine amidotransferase type-1 domain. The Nucleophile role is filled by C266. L267, Q270, N308, G310, and F311 together coordinate L-glutamine. Active-site residues include H349 and E351.

This sequence belongs to the CarA family. In terms of assembly, composed of two chains; the small (or glutamine) chain promotes the hydrolysis of glutamine to ammonia, which is used by the large (or ammonia) chain to synthesize carbamoyl phosphate. Tetramer of heterodimers (alpha,beta)4.

The catalysed reaction is hydrogencarbonate + L-glutamine + 2 ATP + H2O = carbamoyl phosphate + L-glutamate + 2 ADP + phosphate + 2 H(+). The enzyme catalyses L-glutamine + H2O = L-glutamate + NH4(+). Its pathway is amino-acid biosynthesis; L-arginine biosynthesis; carbamoyl phosphate from bicarbonate: step 1/1. It participates in pyrimidine metabolism; UMP biosynthesis via de novo pathway; (S)-dihydroorotate from bicarbonate: step 1/3. In terms of biological role, small subunit of the glutamine-dependent carbamoyl phosphate synthetase (CPSase). CPSase catalyzes the formation of carbamoyl phosphate from the ammonia moiety of glutamine, carbonate, and phosphate donated by ATP, constituting the first step of 2 biosynthetic pathways, one leading to arginine and/or urea and the other to pyrimidine nucleotides. The small subunit (glutamine amidotransferase) binds and cleaves glutamine to supply the large subunit with the substrate ammonia. This is Carbamoyl phosphate synthase small chain from Desulfovibrio desulfuricans (strain ATCC 27774 / DSM 6949 / MB).